Here is a 583-residue protein sequence, read N- to C-terminus: Aspartate--tRNA ligase (583 aa).

Residue glutamate 174 participates in L-aspartate binding. Residues 198–201 form an aspartate region; that stretch reads QITK. Arginine 220 is an L-aspartate binding site. Residues 220–222 and glutamine 229 each bind ATP; that span reads RDE. Histidine 443 contacts L-aspartate. Position 477 (glutamate 477) interacts with ATP. Arginine 484 contributes to the L-aspartate binding site. 529–532 provides a ligand contact to ATP; the sequence is GLDR.

It belongs to the class-II aminoacyl-tRNA synthetase family. Type 1 subfamily. Homodimer.

It localises to the cytoplasm. The catalysed reaction is tRNA(Asp) + L-aspartate + ATP = L-aspartyl-tRNA(Asp) + AMP + diphosphate. Catalyzes the attachment of L-aspartate to tRNA(Asp) in a two-step reaction: L-aspartate is first activated by ATP to form Asp-AMP and then transferred to the acceptor end of tRNA(Asp). In Streptococcus agalactiae serotype V (strain ATCC BAA-611 / 2603 V/R), this protein is Aspartate--tRNA ligase.